Consider the following 101-residue polypeptide: RNA-binding protein Hfq (101 aa).

Positions 9 to 68 (DPFLNALRRERVPVSIYLVNGIKLQGQVESFDQFVILLKNTVSQMVYKHAISTVVPSRPV) constitute a Sm domain. Residues 63–101 (VPSRPVSHHSNTPSGSTNNYHGSNPSAPQQPQQDSDDAE) form a disordered region. A compositionally biased stretch (polar residues) spans 70 to 86 (HHSNTPSGSTNNYHGSN).

It belongs to the Hfq family. Homohexamer.

In terms of biological role, RNA chaperone that binds small regulatory RNA (sRNAs) and mRNAs to facilitate mRNA translational regulation in response to envelope stress, environmental stress and changes in metabolite concentrations. Also binds with high specificity to tRNAs. In Yersinia pseudotuberculosis serotype O:1b (strain IP 31758), this protein is RNA-binding protein Hfq.